Here is a 382-residue protein sequence, read N- to C-terminus: Glutamyl-tRNA reductase (382 aa).

Substrate is bound by residues 38 to 41 (TCNR), serine 85, 90 to 92 (ENQ), and glutamine 96. Catalysis depends on cysteine 39, which acts as the Nucleophile. 164–169 (GAGEIG) is a binding site for NADP(+).

Belongs to the glutamyl-tRNA reductase family. Homodimer.

The catalysed reaction is (S)-4-amino-5-oxopentanoate + tRNA(Glu) + NADP(+) = L-glutamyl-tRNA(Glu) + NADPH + H(+). Its pathway is porphyrin-containing compound metabolism; protoporphyrin-IX biosynthesis; 5-aminolevulinate from L-glutamyl-tRNA(Glu): step 1/2. In terms of biological role, catalyzes the NADPH-dependent reduction of glutamyl-tRNA(Glu) to glutamate 1-semialdehyde (GSA). This is Glutamyl-tRNA reductase from Methanococcus maripaludis (strain C7 / ATCC BAA-1331).